The sequence spans 81 residues: Cytochrome b559 subunit alpha (81 aa).

The helical transmembrane segment at 21–35 threads the bilayer; it reads VIHSITIPMLFIAGW. His23 serves as a coordination point for heme.

It belongs to the PsbE/PsbF family. As to quaternary structure, heterodimer of an alpha subunit and a beta subunit. PSII is composed of 1 copy each of membrane proteins PsbA, PsbB, PsbC, PsbD, PsbE, PsbF, PsbH, PsbI, PsbJ, PsbK, PsbL, PsbM, PsbT, PsbX, PsbY, PsbZ, Psb30/Ycf12, peripheral proteins PsbO, CyanoQ (PsbQ), PsbU, PsbV and a large number of cofactors. It forms dimeric complexes. Heme b serves as cofactor.

It localises to the cellular thylakoid membrane. This b-type cytochrome is tightly associated with the reaction center of photosystem II (PSII). PSII is a light-driven water:plastoquinone oxidoreductase that uses light energy to abstract electrons from H(2)O, generating O(2) and a proton gradient subsequently used for ATP formation. It consists of a core antenna complex that captures photons, and an electron transfer chain that converts photonic excitation into a charge separation. The chain is Cytochrome b559 subunit alpha from Picosynechococcus sp. (strain ATCC 27264 / PCC 7002 / PR-6) (Agmenellum quadruplicatum).